The sequence spans 565 residues: Thiol:disulfide interchange protein DsbD (565 aa).

The first 19 residues, 1-19 (MAQRIFTLILLLCSTSVFA), serve as a signal peptide directing secretion. 2 disulfide bridges follow: C122–C128 and C182–C304. Helical transmembrane passes span 163–183 (LPFS…TPCV), 208–228 (LLTF…GLVV), 243–263 (YVLI…FGLF), 296–316 (IAGL…LLYI), 323–343 (WLGG…LMLI), 357–377 (WMEQ…VFLL), and 384–404 (VWGL…AFIT). One can recognise a Thioredoxin domain in the interval 434-565 (WAFGATHTAQ…FSAHLRDRQP (132 aa)). C480 and C483 form a disulfide bridge.

This sequence belongs to the thioredoxin family. DsbD subfamily.

It localises to the cell inner membrane. The catalysed reaction is [protein]-dithiol + NAD(+) = [protein]-disulfide + NADH + H(+). It catalyses the reaction [protein]-dithiol + NADP(+) = [protein]-disulfide + NADPH + H(+). Its function is as follows. Required to facilitate the formation of correct disulfide bonds in some periplasmic proteins and for the assembly of the periplasmic c-type cytochromes. Acts by transferring electrons from cytoplasmic thioredoxin to the periplasm. This transfer involves a cascade of disulfide bond formation and reduction steps. This is Thiol:disulfide interchange protein DsbD from Shigella flexneri serotype 5b (strain 8401).